The chain runs to 160 residues: Ribosomal RNA large subunit methyltransferase H (160 aa).

Residues Leu-77, Gly-109, and 128–133 (FGRITL) contribute to the S-adenosyl-L-methionine site.

Belongs to the RNA methyltransferase RlmH family. Homodimer.

Its subcellular location is the cytoplasm. The enzyme catalyses pseudouridine(1915) in 23S rRNA + S-adenosyl-L-methionine = N(3)-methylpseudouridine(1915) in 23S rRNA + S-adenosyl-L-homocysteine + H(+). Specifically methylates the pseudouridine at position 1915 (m3Psi1915) in 23S rRNA. The sequence is that of Ribosomal RNA large subunit methyltransferase H from Oenococcus oeni (strain ATCC BAA-331 / PSU-1).